Reading from the N-terminus, the 209-residue chain is Protein lin-28 homolog A (209 aa).

The tract at residues 1 to 31 (MGSVSNQQFAGGCAKAAEEAPEEAPEDAARA) is disordered. G2 is subject to N-acetylglycine. S3 bears the Phosphoserine mark. Positions 39–112 (HGAGICKWFN…GLESIRVTGP (74 aa)) constitute a CSD domain. The flexible linker stretch occupies residues 113–136 (GGVFCIGSERRPKGKSMQKRRSKG). S120 carries the post-translational modification Phosphoserine. CCHC-type zinc fingers lie at residues 137 to 154 (DRCYNCGGLDHHAKECKL) and 159 to 176 (KKCHFCQSISHMVASCPL). The segment at 178–209 (AQQGPSAQGKPTYFREEEEEIHSPTLLPEAQN) is disordered. The residue at position 200 (S200) is a Phosphoserine.

The protein belongs to the lin-28 family. Monomer. During skeletal muscle differentiation, associated with translation initiation complexes in the polysomal compartment. Directly interacts with EIF3S2. Interacts with NCL in an RNA-dependent manner. Interacts (via C-terminus) with DHX9 (via N- and C-terminus); this interaction occurs in a RNA-independent manner. Interacts with TUT4 in the presence of pre-let-7 RNA. In terms of tissue distribution, expressed in embryonic stem cells, placenta and testis. Tends to be up-regulated in HER2-overexpressing breast tumors.

It is found in the cytoplasm. Its subcellular location is the rough endoplasmic reticulum. The protein localises to the P-body. It localises to the stress granule. The protein resides in the nucleus. It is found in the nucleolus. RNA-binding protein that inhibits processing of pre-let-7 miRNAs and regulates translation of mRNAs that control developmental timing, pluripotency and metabolism. Seems to recognize a common structural G-quartet (G4) feature in its miRNA and mRNA targets. 'Translational enhancer' that drives specific mRNAs to polysomes and increases the efficiency of protein synthesis. Its association with the translational machinery and target mRNAs results in an increased number of initiation events per molecule of mRNA and, indirectly, in mRNA stabilization. Binds IGF2 mRNA, MYOD1 mRNA, ARBP/36B4 ribosomal protein mRNA and its own mRNA. Essential for skeletal muscle differentiation program through the translational up-regulation of IGF2 expression. Suppressor of microRNA (miRNA) biogenesis, including that of let-7, miR107, miR-143 and miR-200c. Specifically binds the miRNA precursors (pre-miRNAs), recognizing an 5'-GGAG-3' motif found in pre-miRNA terminal loop, and recruits TUT4 and TUT7 uridylyltransferases. This results in the terminal uridylation of target pre-miRNAs. Uridylated pre-miRNAs fail to be processed by Dicer and undergo degradation. The repression of let-7 expression is required for normal development and contributes to maintain the pluripotent state by preventing let-7-mediated differentiation of embryonic stem cells. Localized to the periendoplasmic reticulum area, binds to a large number of spliced mRNAs and inhibits the translation of mRNAs destined for the ER, reducing the synthesis of transmembrane proteins, ER or Golgi lumen proteins, and secretory proteins. Binds to and enhances the translation of mRNAs for several metabolic enzymes, such as PFKP, PDHA1 or SDHA, increasing glycolysis and oxidative phosphorylation. Which, with the let-7 repression may enhance tissue repair in adult tissue. In Homo sapiens (Human), this protein is Protein lin-28 homolog A (LIN28A).